The primary structure comprises 300 residues: tRNA-cytidine(32) 2-sulfurtransferase (300 aa).

The PP-loop motif motif lies at Ser41 to Ser46. The [4Fe-4S] cluster site is built by Cys116, Cys119, and Cys207.

Belongs to the TtcA family. Homodimer. Mg(2+) is required as a cofactor. Requires [4Fe-4S] cluster as cofactor.

It is found in the cytoplasm. It carries out the reaction cytidine(32) in tRNA + S-sulfanyl-L-cysteinyl-[cysteine desulfurase] + AH2 + ATP = 2-thiocytidine(32) in tRNA + L-cysteinyl-[cysteine desulfurase] + A + AMP + diphosphate + H(+). It participates in tRNA modification. Functionally, catalyzes the ATP-dependent 2-thiolation of cytidine in position 32 of tRNA, to form 2-thiocytidine (s(2)C32). The sulfur atoms are provided by the cysteine/cysteine desulfurase (IscS) system. This is tRNA-cytidine(32) 2-sulfurtransferase from Idiomarina loihiensis (strain ATCC BAA-735 / DSM 15497 / L2-TR).